A 432-amino-acid polypeptide reads, in one-letter code: Glutamyl-tRNA reductase (432 aa).

Residues Thr49–Arg52, Ser107, Glu112–Gln114, and Gln118 contribute to the substrate site. Cys50 serves as the catalytic Nucleophile. NADP(+) is bound at residue Gly186–Gly191.

It belongs to the glutamyl-tRNA reductase family. As to quaternary structure, homodimer.

It catalyses the reaction (S)-4-amino-5-oxopentanoate + tRNA(Glu) + NADP(+) = L-glutamyl-tRNA(Glu) + NADPH + H(+). It participates in porphyrin-containing compound metabolism; protoporphyrin-IX biosynthesis; 5-aminolevulinate from L-glutamyl-tRNA(Glu): step 1/2. Functionally, catalyzes the NADPH-dependent reduction of glutamyl-tRNA(Glu) to glutamate 1-semialdehyde (GSA). In Campylobacter jejuni subsp. doylei (strain ATCC BAA-1458 / RM4099 / 269.97), this protein is Glutamyl-tRNA reductase.